Here is a 322-residue protein sequence, read N- to C-terminus: uncharacterized protein (322 aa).

Residues 205-286 (QEIKNAHAAL…LKKAISEAVQ (82 aa)) are a coiled coil. Composition is skewed to basic and acidic residues over residues 254-281 (EKEE…KKAI) and 290-299 (DRIEAIEKSR). Positions 254-322 (EKEEELNKKD…VQKSIWSGLF (69 aa)) are disordered. The segment covering 310 to 322 (SEQVQKSIWSGLF) has biased composition (polar residues).

It to B.subtilis XkdF.

This is an uncharacterized protein from Bacillus subtilis (strain 168).